Consider the following 456-residue polypeptide: Bifunctional protein GlmU (456 aa).

Residues 1-229 (MLNNAMSVVI…LSEVEGVNNR (229 aa)) are pyrophosphorylase. UDP-N-acetyl-alpha-D-glucosamine-binding positions include 11–14 (LAAG), Lys-25, Gln-76, 81–82 (GT), 103–105 (YGD), Gly-140, Glu-154, Asn-169, and Asn-227. Asp-105 is a binding site for Mg(2+). Asn-227 provides a ligand contact to Mg(2+). Residues 230-250 (LQLSRLERVYQSEQAEKLLLA) form a linker region. Residues 251–456 (GVMLRDPARF…EGWRRPVKKK (206 aa)) are N-acetyltransferase. The UDP-N-acetyl-alpha-D-glucosamine site is built by Arg-333 and Lys-351. His-363 serves as the catalytic Proton acceptor. Positions 366 and 377 each coordinate UDP-N-acetyl-alpha-D-glucosamine. Acetyl-CoA-binding positions include Ala-380, 386–387 (NY), Ser-405, Ala-423, and Arg-440.

This sequence in the N-terminal section; belongs to the N-acetylglucosamine-1-phosphate uridyltransferase family. In the C-terminal section; belongs to the transferase hexapeptide repeat family. Homotrimer. It depends on Mg(2+) as a cofactor.

Its subcellular location is the cytoplasm. It catalyses the reaction alpha-D-glucosamine 1-phosphate + acetyl-CoA = N-acetyl-alpha-D-glucosamine 1-phosphate + CoA + H(+). It carries out the reaction N-acetyl-alpha-D-glucosamine 1-phosphate + UTP + H(+) = UDP-N-acetyl-alpha-D-glucosamine + diphosphate. It functions in the pathway nucleotide-sugar biosynthesis; UDP-N-acetyl-alpha-D-glucosamine biosynthesis; N-acetyl-alpha-D-glucosamine 1-phosphate from alpha-D-glucosamine 6-phosphate (route II): step 2/2. It participates in nucleotide-sugar biosynthesis; UDP-N-acetyl-alpha-D-glucosamine biosynthesis; UDP-N-acetyl-alpha-D-glucosamine from N-acetyl-alpha-D-glucosamine 1-phosphate: step 1/1. Its pathway is bacterial outer membrane biogenesis; LPS lipid A biosynthesis. Its function is as follows. Catalyzes the last two sequential reactions in the de novo biosynthetic pathway for UDP-N-acetylglucosamine (UDP-GlcNAc). The C-terminal domain catalyzes the transfer of acetyl group from acetyl coenzyme A to glucosamine-1-phosphate (GlcN-1-P) to produce N-acetylglucosamine-1-phosphate (GlcNAc-1-P), which is converted into UDP-GlcNAc by the transfer of uridine 5-monophosphate (from uridine 5-triphosphate), a reaction catalyzed by the N-terminal domain. This chain is Bifunctional protein GlmU, found in Shigella boydii serotype 18 (strain CDC 3083-94 / BS512).